The following is a 261-amino-acid chain: Eukaryotic translation initiation factor 3 subunit J-A (261 aa).

The segment covering 1 to 11 (MAAAAAAAAAA) has biased composition (low complexity). The interval 1–113 (MAAAAAAAAA…EPEESKVLTP (113 aa)) is disordered. The segment at 4–72 (AAAAAAAAGD…KEEAEVKPEV (69 aa)) is sufficient for interaction with EIF3B. 3 positions are modified to phosphoserine: serine 14, serine 16, and serine 23. A compositionally biased stretch (acidic residues) spans 43–64 (EGEDEDEDVKDNWDDDDDENKE). A compositionally biased stretch (basic and acidic residues) spans 65-109 (EAEVKPEVKISEKKKIAEKIKEKERQQKKRQEEIKKRLEEPEESK). A coiled-coil region spans residues 73–138 (KISEKKKIAE…ESDLELAKET (66 aa)). Lysine 109 participates in a covalent cross-link: Glycyl lysine isopeptide (Lys-Gly) (interchain with G-Cter in SUMO2). Phosphothreonine is present on threonine 112. Position 130 is a phosphoserine (serine 130). A promotes stable association with the 40S ribosome region spans residues 246–261 (YGGYEGGYVQDYEDFM). A Phosphotyrosine modification is found at tyrosine 257.

Belongs to the eIF-3 subunit J family. Component of the eukaryotic translation initiation factor 3 (eIF-3) complex, which is composed of 13 subunits: EIF3A, EIF3B, EIF3C, EIF3D, EIF3E, EIF3F, EIF3G, EIF3H, EIF3I, EIF3J, EIF3K, EIF3L and EIF3M. The eIF-3 complex appears to include 3 stable modules: module A is composed of EIF3A, EIF3B, EIF3G and EIF3I; module B is composed of EIF3F, EIF3H, and EIF3M; and module C is composed of EIF3C, EIF3D, EIF3E, EIF3K and EIF3L. EIF3C of module C binds EIF3B of module A and EIF3H of module B, thereby linking the three modules. EIF3J is a labile subunit that binds to the eIF-3 complex via EIF3B. The eIF-3 complex interacts with RPS6KB1 under conditions of nutrient depletion. Mitogenic stimulation leads to binding and activation of a complex composed of MTOR and RPTOR, leading to phosphorylation and release of RPS6KB1 and binding of EIF4B to eIF-3. Post-translationally, phosphorylated. Phosphorylation is enhanced upon serum stimulation.

The protein localises to the cytoplasm. Component of the eukaryotic translation initiation factor 3 (eIF-3) complex, which is required for several steps in the initiation of protein synthesis. The eIF-3 complex associates with the 40S ribosome and facilitates the recruitment of eIF-1, eIF-1A, eIF-2:GTP:methionyl-tRNAi and eIF-5 to form the 43S pre-initiation complex (43S PIC). The eIF-3 complex stimulates mRNA recruitment to the 43S PIC and scanning of the mRNA for AUG recognition. The eIF-3 complex is also required for disassembly and recycling of post-termination ribosomal complexes and subsequently prevents premature joining of the 40S and 60S ribosomal subunits prior to initiation. The eIF-3 complex specifically targets and initiates translation of a subset of mRNAs involved in cell proliferation, including cell cycling, differentiation and apoptosis, and uses different modes of RNA stem-loop binding to exert either translational activation or repression. This subunit binds directly within the mRNA entry channel of the 40S ribosome to the aminoacyl (A) site. It may regulate the interaction between the 43S PIC and mRNA. In Mus musculus (Mouse), this protein is Eukaryotic translation initiation factor 3 subunit J-A (Eif3j1).